We begin with the raw amino-acid sequence, 348 residues long: Phenylalanine--tRNA ligase alpha subunit (348 aa).

Glutamate 259 serves as a coordination point for Mg(2+).

Belongs to the class-II aminoacyl-tRNA synthetase family. Phe-tRNA synthetase alpha subunit type 1 subfamily. Tetramer of two alpha and two beta subunits. Mg(2+) serves as cofactor.

The protein resides in the cytoplasm. It carries out the reaction tRNA(Phe) + L-phenylalanine + ATP = L-phenylalanyl-tRNA(Phe) + AMP + diphosphate + H(+). In Lacticaseibacillus paracasei (strain ATCC 334 / BCRC 17002 / CCUG 31169 / CIP 107868 / KCTC 3260 / NRRL B-441) (Lactobacillus paracasei), this protein is Phenylalanine--tRNA ligase alpha subunit.